A 105-amino-acid chain; its full sequence is Phosphoribosyl-AMP cyclohydrolase (105 aa).

Aspartate 72 serves as a coordination point for Mg(2+). Position 73 (cysteine 73) interacts with Zn(2+). Residues aspartate 74 and aspartate 76 each contribute to the Mg(2+) site. Zn(2+) contacts are provided by cysteine 89 and cysteine 96.

The protein belongs to the PRA-CH family. In terms of assembly, homodimer. Requires Mg(2+) as cofactor. Zn(2+) is required as a cofactor.

It localises to the cytoplasm. It carries out the reaction 1-(5-phospho-beta-D-ribosyl)-5'-AMP + H2O = 1-(5-phospho-beta-D-ribosyl)-5-[(5-phospho-beta-D-ribosylamino)methylideneamino]imidazole-4-carboxamide. It functions in the pathway amino-acid biosynthesis; L-histidine biosynthesis; L-histidine from 5-phospho-alpha-D-ribose 1-diphosphate: step 3/9. Catalyzes the hydrolysis of the adenine ring of phosphoribosyl-AMP. This chain is Phosphoribosyl-AMP cyclohydrolase, found in Listeria monocytogenes serovar 1/2a (strain ATCC BAA-679 / EGD-e).